The sequence spans 485 residues: D-alanine--D-alanyl carrier protein ligase (485 aa).

144 to 145 (TS) contacts ATP. D189 is a D-alanine binding site. Residue 284-289 (NTYGPT) coordinates ATP. V293 is a D-alanine binding site. The ATP site is built by D365 and K473. Position 473 (K473) interacts with D-alanine.

Belongs to the ATP-dependent AMP-binding enzyme family. DltA subfamily.

The protein resides in the cytoplasm. The catalysed reaction is holo-[D-alanyl-carrier protein] + D-alanine + ATP = D-alanyl-[D-alanyl-carrier protein] + AMP + diphosphate. It participates in cell wall biogenesis; lipoteichoic acid biosynthesis. In terms of biological role, catalyzes the first step in the D-alanylation of lipoteichoic acid (LTA), the activation of D-alanine and its transfer onto the D-alanyl carrier protein (Dcp) DltC. In an ATP-dependent two-step reaction, forms a high energy D-alanyl-AMP intermediate, followed by transfer of the D-alanyl residue as a thiol ester to the phosphopantheinyl prosthetic group of the Dcp. D-alanylation of LTA plays an important role in modulating the properties of the cell wall in Gram-positive bacteria, influencing the net charge of the cell wall. This Staphylococcus aureus (strain MRSA252) protein is D-alanine--D-alanyl carrier protein ligase.